The primary structure comprises 366 residues: Mitochondrial carrier protein MTM1 (366 aa).

Solcar repeat units lie at residues 14-149 (ERML…IRDV), 156-250 (YPTL…CKER), and 266-359 (VHFI…SKKV). 6 helical membrane-spanning segments follow: residues 17-36 (LSAG…MDVV), 126-146 (SLTL…YEYI), 162-182 (LFCG…LELV), 229-249 (TLWR…LCKE), 268-286 (FINS…AICT), and 331-352 (LYTG…MISS).

Belongs to the mitochondrial carrier (TC 2.A.29) family.

The protein resides in the mitochondrion inner membrane. Functionally, involved in the mitochondrial activation of SOD2 by specifically facilitating insertion of the essential manganese cofactor. Has the ability to activate iron regulon in an iron-dependent manner. Responds to calorie restriction (CR) strength. In Saccharomyces cerevisiae (strain ATCC 204508 / S288c) (Baker's yeast), this protein is Mitochondrial carrier protein MTM1 (MTM1).